Consider the following 1086-residue polypeptide: NAD(P) transhydrogenase, mitochondrial (1086 aa).

Residues methionine 1 to tryptophan 43 constitute a mitochondrion transit peptide. Topologically, residues cysteine 44 to threonine 474 are mitochondrial matrix. N6-acetyllysine is present on lysine 70. Lysine 117 carries the N6-succinyllysine modification. NAD(+) is bound at residue arginine 182–threonine 184. At lysine 224 the chain carries N6-succinyllysine. Residues valine 237, aspartate 257–arginine 259, and glycine 287 contribute to the NAD(+) site. An N6-succinyllysine modification is found at lysine 294. NAD(+)-binding residues include glutamate 300 and leucine 319. Lysine 331 carries the post-translational modification N6-succinyllysine. Lysine 397 carries the post-translational modification N6-acetyllysine. 4 consecutive transmembrane segments (helical) span residues serine 475–alanine 493, methionine 501–proline 521, leucine 527–methionine 546, and glycine 558–threonine 578. Residues glutamine 579 to asparagine 595 lie on the Mitochondrial matrix side of the membrane. The next 5 membrane-spanning stretches (helical) occupy residues tyrosine 596–glycine 616, isoleucine 622–glycine 642, leucine 646–leucine 666, leucine 672–alanine 691, and leucine 702–tyrosine 722. Over isoleucine 723–lysine 739 the chain is Cytoplasmic. Transmembrane regions (helical) follow at residues isoleucine 740 to tyrosine 760, histidine 778 to methionine 797, phenylalanine 801 to glycine 819, valine 833 to leucine 853, and leucine 857 to alanine 879. The Mitochondrial matrix portion of the chain corresponds to methionine 880–lysine 1086. NADP(+) is bound by residues tyrosine 933, valine 965–proline 970, asparagine 1009–threonine 1011, glycine 1026–methionine 1027, lysine 1042–tyrosine 1049, and aspartate 1068–alanine 1069. N6-succinyllysine is present on lysine 1079.

This sequence in the N-terminal section; belongs to the AlaDH/PNT family. It in the C-terminal section; belongs to the PNT beta subunit family. As to quaternary structure, homodimer.

Its subcellular location is the mitochondrion inner membrane. It catalyses the reaction NAD(+) + NADPH + H(+)(in) = NADH + NADP(+) + H(+)(out). In terms of biological role, the transhydrogenation between NADH and NADP is coupled to respiration and ATP hydrolysis and functions as a proton pump across the membrane. May play a role in reactive oxygen species (ROS) detoxification in the adrenal gland. The polypeptide is NAD(P) transhydrogenase, mitochondrial (NNT) (Bos taurus (Bovine)).